The following is a 287-amino-acid chain: uncharacterized protein (287 aa).

10 helical membrane-spanning segments follow: residues 7-28 (LLLT…RAAL), 32-54 (AIDA…AVLL), 67-86 (GWRG…YAYV), 91-113 (GTGA…LLRG), 120-139 (ALLG…LPGA), 144-163 (LGGA…YTLL), 170-192 (PLAV…LLAF), 202-224 (GLAY…WYSA), 231-253 (IQGA…LLLG), and 263-280 (ATLA…PRLG). 2 EamA domains span residues 15–136 (LAFA…FLLL) and 155–276 (LAWG…LILA).

It localises to the cell membrane. This is an uncharacterized protein from Pseudomonas aeruginosa (strain ATCC 15692 / DSM 22644 / CIP 104116 / JCM 14847 / LMG 12228 / 1C / PRS 101 / PAO1).